The chain runs to 94 residues: ATP synthase subunit c (94 aa).

Helical transmembrane passes span 15–35 (VSVGIILAAAGLGSALGWGLI) and 61–81 (GGLMEAFPMIVLGMSMWFIFA).

It belongs to the ATPase C chain family. In terms of assembly, F-type ATPases have 2 components, F(1) - the catalytic core - and F(0) - the membrane proton channel. F(1) has five subunits: alpha(3), beta(3), gamma(1), delta(1), epsilon(1). F(0) has three main subunits: a(1), b(2) and c(10-14). The alpha and beta chains form an alternating ring which encloses part of the gamma chain. F(1) is attached to F(0) by a central stalk formed by the gamma and epsilon chains, while a peripheral stalk is formed by the delta and b chains.

Its subcellular location is the cell inner membrane. Its function is as follows. F(1)F(0) ATP synthase produces ATP from ADP in the presence of a proton or sodium gradient. F-type ATPases consist of two structural domains, F(1) containing the extramembraneous catalytic core and F(0) containing the membrane proton channel, linked together by a central stalk and a peripheral stalk. During catalysis, ATP synthesis in the catalytic domain of F(1) is coupled via a rotary mechanism of the central stalk subunits to proton translocation. Functionally, key component of the F(0) channel; it plays a direct role in translocation across the membrane. A homomeric c-ring of between 10-14 subunits forms the central stalk rotor element with the F(1) delta and epsilon subunits. This Nitrosococcus oceani (strain ATCC 19707 / BCRC 17464 / JCM 30415 / NCIMB 11848 / C-107) protein is ATP synthase subunit c.